Reading from the N-terminus, the 171-residue chain is Sigma intracellular receptor 2 (171 aa).

The Cytoplasmic portion of the chain corresponds to 1 to 6; that stretch reads MAVCAR. The chain crosses the membrane as a helical span at residues 7–27; the sequence is LLEWIFFFYFFSHIPITLLVD. One can recognise an EXPERA domain in the interval 8 to 153; it reads LEWIFFFYFF…PYLLVPVLLL (146 aa). Over 28-66 the chain is Lumenal; sequence LQAVLPPSLYPQELLDLMKWYTVAFKDHLMANPPPWFKS. Residues 67 to 87 form a helical membrane-spanning segment; that stretch reads FVYCEAILQLPFFPVAAYAFF. Cholesterol is bound by residues isoleucine 73 and glutamine 75. Over 88–97 the chain is Cytoplasmic; it reads KGGCKWIRIP. A helical membrane pass occupies residues 98–118; that stretch reads AIVYSAHVATTVIAIIGHILF. Residues 119-137 lie on the Lumenal side of the membrane; the sequence is GEFPKSDVIAPLTQKDRLT. A helical membrane pass occupies residues 138 to 158; sequence LVSIYAPYLLVPVLLLLTMLF. Residues 159 to 171 are Cytoplasmic-facing; it reads SPRYRQEEKRKRK. An ER retention motif motif is present at residues 167–171; the sequence is KRKRK.

This sequence belongs to the TMEM97/sigma-2 receptor family. Homodimer.

It is found in the rough endoplasmic reticulum membrane. It localises to the nucleus membrane. Sigma-2 receptor which contributes to ameliorate dysfunctional cellular processes and slow degenerative progression by regulating cell functions including cholesterol biosynthesis/trafficking, membrane trafficking, autophagy, lipid membrane-bound protein trafficking, and receptor stabilization at the cell surface. Forms a ternary complex with PGRMC1 receptor and low density lipoprotein receptor/LDLR at the plasma membrane, which increases LDLR-mediated LDL cholesterol internalization. Decreases lysosomal sterol transporter NPC1 availability to the cell, probably through NPC1-binding, hence controlling lipid transport, including cholesterol and LBPA, outside of late endosome/lysosome. Binds regio- and stereoselective ligand 20(S)-hydroxycholesterol (20(S)-OHC), thereby linking OHC binding to cholesterol homeostasis. Also able to bind cholesterol. Binds histatin 1 (Hst 1)/HN1 salivary peptide at the ER membrane, which is critical for increasing mitochondria-ER contacts and stimulating Hst1 wound healing properties. May alter the activity of some cytochrome P450 proteins. Although shows homologies with sterol isomerases (EXPERA domain), not able to catalyze sterol isomerization. However, may act as sensors of these molecules. Acts as a quality control factor in the ER, promoting the proteolytic degradation of nonproductive and extramitochondrial precursor proteins in the ER membrane thus removing them from the ER surface. This is Sigma intracellular receptor 2 (tmem97) from Xenopus tropicalis (Western clawed frog).